Reading from the N-terminus, the 426-residue chain is Probable glucose-6-phosphate isomerase (426 aa).

Catalysis depends on Glu272, which acts as the Proton donor. Catalysis depends on residues His293 and Lys404.

Belongs to the GPI family.

It is found in the cytoplasm. It catalyses the reaction alpha-D-glucose 6-phosphate = beta-D-fructose 6-phosphate. The protein operates within carbohydrate biosynthesis; gluconeogenesis. It participates in carbohydrate degradation; glycolysis; D-glyceraldehyde 3-phosphate and glycerone phosphate from D-glucose: step 2/4. Catalyzes the reversible isomerization of glucose-6-phosphate to fructose-6-phosphate. In Halobacterium salinarum (strain ATCC 700922 / JCM 11081 / NRC-1) (Halobacterium halobium), this protein is Probable glucose-6-phosphate isomerase.